A 450-amino-acid polypeptide reads, in one-letter code: Saccharopine dehydrogenase [NADP(+), L-glutamate-forming] (450 aa).

NADP(+)-binding positions include 11 to 14 (SGFV), 33 to 35 (CRT), 55 to 56 (DV), isoleucine 76, 98 to 99 (TS), 125 to 127 (LDP), and serine 175. L-saccharopine-binding positions include 99–100 (SY) and aspartate 126. Residues arginine 224 and 245–247 (TLR) each bind L-saccharopine.

The protein belongs to the saccharopine dehydrogenase family. In terms of assembly, homodimer.

It carries out the reaction L-saccharopine + NADP(+) + H2O = (S)-2-amino-6-oxohexanoate + L-glutamate + NADPH + H(+). The protein operates within amino-acid biosynthesis; L-lysine biosynthesis via AAA pathway; L-lysine from L-alpha-aminoadipate (fungal route): step 2/3. This Pyricularia oryzae (strain 70-15 / ATCC MYA-4617 / FGSC 8958) (Rice blast fungus) protein is Saccharopine dehydrogenase [NADP(+), L-glutamate-forming] (LYS3).